Consider the following 353-residue polypeptide: Hydrazine synthase subunit gamma (353 aa).

Positions M1–A39 are cleaved as a signal peptide. Heme c-binding residues include C102, C105, and H106. Ca(2+) is bound by residues D118, L119, E122, G123, S126, N129, L139, and P141. Heme c is bound by residues C165, C225, C228, and H229. Positions E209–L353 constitute a Cytochrome c domain. Positions 296, 306, 307, and 308 each coordinate Ca(2+). H332 serves as a coordination point for heme c.

In terms of assembly, part of the hydrazine synthase complex that forms an elongated dimer of heterotrimers composed of one alpha, one beta and one gamma subunit. Heme c serves as cofactor.

It localises to the anammoxosome. It carries out the reaction hydrazine + 3 Fe(III)-[cytochrome c] + H2O = nitric oxide + 3 Fe(II)-[cytochrome c] + NH4(+) + 2 H(+). The protein operates within nitrogen metabolism. In terms of biological role, component of the hydrazine synthase complex that catalyzes the condensation of nitric oxide (NO) with ammonium to form hydrazine. The gamma subunit catalyzes the first half-reaction, i.e. the three-electron reduction of nitric oxide to hydroxylamine; it may obtain electrons from the triheme cytochrome c kuste2854. Is involved in anaerobic ammonium oxidation (anammox), a biological process in which nitrite is used as the electron acceptor in the conversion of ammonium to dinitrogen gas (N2) and water; this bacterial process has a major role in the Earth's nitrogen cycle and has been estimated to synthesize up to 50% of the dinitrogen gas emitted into our atmosphere from the oceans. This chain is Hydrazine synthase subunit gamma, found in Kuenenia stuttgartiensis.